Here is a 146-residue protein sequence, read N- to C-terminus: Hemoglobin subunit beta (146 aa).

The region spanning P2 to H146 is the Globin domain. Residues H63 and H92 each contribute to the heme b site.

The protein belongs to the globin family. Heterotetramer of two alpha chains and two beta chains. In terms of tissue distribution, red blood cells.

In terms of biological role, involved in oxygen transport from the lung to the various peripheral tissues. In Caiman crocodilus (Spectacled caiman), this protein is Hemoglobin subunit beta (HBB).